Here is a 616-residue protein sequence, read N- to C-terminus: Dihydroxy-acid dehydratase (616 aa).

Asp81 contacts Mg(2+). Cys122 serves as a coordination point for [2Fe-2S] cluster. 2 residues coordinate Mg(2+): Asp123 and Lys124. At Lys124 the chain carries N6-carboxylysine. Cys195 is a binding site for [2Fe-2S] cluster. Glu491 lines the Mg(2+) pocket. The active-site Proton acceptor is Ser517.

Belongs to the IlvD/Edd family. In terms of assembly, homodimer. Requires [2Fe-2S] cluster as cofactor. Mg(2+) is required as a cofactor.

The catalysed reaction is (2R)-2,3-dihydroxy-3-methylbutanoate = 3-methyl-2-oxobutanoate + H2O. It carries out the reaction (2R,3R)-2,3-dihydroxy-3-methylpentanoate = (S)-3-methyl-2-oxopentanoate + H2O. The protein operates within amino-acid biosynthesis; L-isoleucine biosynthesis; L-isoleucine from 2-oxobutanoate: step 3/4. It participates in amino-acid biosynthesis; L-valine biosynthesis; L-valine from pyruvate: step 3/4. In terms of biological role, functions in the biosynthesis of branched-chain amino acids. Catalyzes the dehydration of (2R,3R)-2,3-dihydroxy-3-methylpentanoate (2,3-dihydroxy-3-methylvalerate) into 2-oxo-3-methylpentanoate (2-oxo-3-methylvalerate) and of (2R)-2,3-dihydroxy-3-methylbutanoate (2,3-dihydroxyisovalerate) into 2-oxo-3-methylbutanoate (2-oxoisovalerate), the penultimate precursor to L-isoleucine and L-valine, respectively. The chain is Dihydroxy-acid dehydratase from Methylocella silvestris (strain DSM 15510 / CIP 108128 / LMG 27833 / NCIMB 13906 / BL2).